Reading from the N-terminus, the 363-residue chain is Peroxisomal (S)-2-hydroxyacid oxidase GLO3 (363 aa).

An FMN hydroxy acid dehydrogenase domain is found at 1 to 357; it reads MDQIVNVDEF…TRNHVRTENE (357 aa). Residues 78 to 80, serine 107, 128 to 130, and threonine 156 contribute to the FMN site; these read PTG and QIY. Tyrosine 130 contributes to the a 2-oxocarboxylate binding site. Arginine 165 lines the a 2-oxocarboxylate pocket. Residues lysine 228 and serine 250 each coordinate FMN. Histidine 252 serves as the catalytic Proton acceptor. Residue arginine 255 coordinates a 2-oxocarboxylate. Residues 283–287 and 306–307 contribute to the FMN site; these read DGGVR and GR. The Microbody targeting signal motif lies at 361–363; that stretch reads SML.

This sequence belongs to the FMN-dependent alpha-hydroxy acid dehydrogenase family. As to quaternary structure, homotetramer. It depends on FMN as a cofactor.

It localises to the peroxisome. The catalysed reaction is a (2S)-2-hydroxycarboxylate + O2 = a 2-oxocarboxylate + H2O2. It catalyses the reaction 2-hydroxy-4-methylpentanoate + O2 = 4-methyl-2-oxopentanoate + H2O2. It carries out the reaction 2-hydroxyhexanoate + O2 = 2-oxohexanoate + H2O2. The enzyme catalyses 2-hydroxyoctanoate + O2 = 2-oxooctanoate + H2O2. Oxidase that catalyzes the oxidation of a broad range of 2-hydroxyacids to the corresponding 2-oxoacids, with a reduction of O2 to H2O2. Displays the highest activity with leucic acid (2-hydroxy-4-methylpentanoate) and has intermediate activity with 2-hydroxyhexanoate and 2-hydroxyoctanote. Shows lower activity with 2-hydroxydodecanoate, valic acid, and isoleucic acid and extremely low activity with glycolate and L-lactate. Cannot use 2-hydroxyhexadecanoate or D-lactate as substrates. May be involved in the conversion or degradation of 2-hydroxyacids produced during the metabolism of fatty acids or amino acids. The chain is Peroxisomal (S)-2-hydroxyacid oxidase GLO3 (GLO3) from Arabidopsis thaliana (Mouse-ear cress).